We begin with the raw amino-acid sequence, 230 residues long: Large ribosomal subunit protein uL1 (230 aa).

This sequence belongs to the universal ribosomal protein uL1 family. Part of the 50S ribosomal subunit.

In terms of biological role, binds directly to 23S rRNA. The L1 stalk is quite mobile in the ribosome, and is involved in E site tRNA release. Functionally, protein L1 is also a translational repressor protein, it controls the translation of the L11 operon by binding to its mRNA. The chain is Large ribosomal subunit protein uL1 from Oenococcus oeni (strain ATCC BAA-331 / PSU-1).